The sequence spans 1445 residues: CD109 antigen (1445 aa).

The first 21 residues, Met-1–Ala-21, serve as a signal peptide directing secretion. N-linked (GlcNAc...) asparagine glycans are attached at residues Asn-68, Asn-118, Asn-247, Asn-279, Asn-365, Asn-419, Asn-513, and Asn-645. Positions Asp-593–Gly-702 are bait region (approximate). Positions Cys-921 to Gln-924 form a cross-link, isoglutamyl cysteine thioester (Cys-Gln). Asn-1086 and Asn-1355 each carry an N-linked (GlcNAc...) asparagine glycan. Ala-1420 is lipidated: GPI-anchor amidated alanine. A propeptide spans Ser-1421 to Leu-1445 (removed in mature form).

The protein belongs to the protease inhibitor I39 (alpha-2-macroglobulin) family. As to quaternary structure, heterodimer; disulfide-linked. Interacts with TGFB1 and TGFBR1. Forms a heteromeric complex with TGFBR1, TGFBR2 and TGFBR3 in a ligand-independent manner. Post-translationally, N-glycosylated. In terms of processing, 2 forms of 150 (p150) and 120 kDa (p120) exist due to proteolytic degradation from a 180 kDa form. In terms of tissue distribution, widely expressed with high level in uterus, aorta, heart, lung, trachea, placenta and in fetal heart, kidney, liver, spleen and lung. Expressed by CD34(+) acute myeloid leukemia cell lines, T-cell lines, activated T-lymphoblasts, endothelial cells and activated platelets. Isoform 4 is expressed in placenta. Isoform 1 is expressed in keratinocytes and placenta.

The protein resides in the cell membrane. Functionally, modulates negatively TGFB1 signaling in keratinocytes. The sequence is that of CD109 antigen (CD109) from Homo sapiens (Human).